The following is a 364-amino-acid chain: tRNA 2-selenouridine synthase (364 aa).

Residues 14-137 (LLADTPLIDV…LRQTAIQATW (124 aa)) form the Rhodanese domain. Residue cysteine 97 is the S-selanylcysteine intermediate of the active site.

This sequence belongs to the SelU family. In terms of assembly, monomer.

It carries out the reaction 5-methylaminomethyl-2-thiouridine(34) in tRNA + selenophosphate + (2E)-geranyl diphosphate + H2O + H(+) = 5-methylaminomethyl-2-selenouridine(34) in tRNA + (2E)-thiogeraniol + phosphate + diphosphate. It catalyses the reaction 5-methylaminomethyl-2-thiouridine(34) in tRNA + (2E)-geranyl diphosphate = 5-methylaminomethyl-S-(2E)-geranyl-thiouridine(34) in tRNA + diphosphate. The enzyme catalyses 5-methylaminomethyl-S-(2E)-geranyl-thiouridine(34) in tRNA + selenophosphate + H(+) = 5-methylaminomethyl-2-(Se-phospho)selenouridine(34) in tRNA + (2E)-thiogeraniol. The catalysed reaction is 5-methylaminomethyl-2-(Se-phospho)selenouridine(34) in tRNA + H2O = 5-methylaminomethyl-2-selenouridine(34) in tRNA + phosphate. Involved in the post-transcriptional modification of the uridine at the wobble position (U34) of tRNA(Lys), tRNA(Glu) and tRNA(Gln). Catalyzes the conversion of 2-thiouridine (S2U-RNA) to 2-selenouridine (Se2U-RNA). Acts in a two-step process involving geranylation of 2-thiouridine (S2U) to S-geranyl-2-thiouridine (geS2U) and subsequent selenation of the latter derivative to 2-selenouridine (Se2U) in the tRNA chain. The protein is tRNA 2-selenouridine synthase of Salmonella heidelberg (strain SL476).